We begin with the raw amino-acid sequence, 1032 residues long: Baseplate wedge protein gp7 (1032 aa).

The interval 1012–1032 (LKDNIGNPRDPENPTQVKIDE) is disordered.

The protein belongs to the T4likevirus baseplate wedge protein gp7 family. Heterotrimer with gp6; assembles as a (gp6)2-gp7 heterotrimeric molecule. The (gp6)2-gp7 heterotrimeric molecule further interacts with gp25 and gp53. The gp25-(gp6)2-gp7 module is involved in sheath contraction. Interacts with gp8. Binds to gp10 homotrimer; disulfide-linked. Heteromultimer with gp10; a gp10 molecule is disulfide-linked to gp7 and the other two remaining gp10 molecules form a disulfide bond. Part of the baseplate macromolecular complex which consists of gp5, gp5.4, gp27 (central spike complex); gp6, gp25, gp53 (inner baseplate); gp7, gp8 (intermediate baseplate); gp9, gp10, gp11, gp12 (peripheral); gp48 and gp54 (proximal region of the tail tube).

The protein localises to the virion. Intermediate/inner baseplate protein. The gp25-(gp6)2-gp7 module is involved in sheath contraction. Involved in the tail assembly. The chain is Baseplate wedge protein gp7 (7) from Enterobacteria phage T4 (Bacteriophage T4).